Here is a 250-residue protein sequence, read N- to C-terminus: uncharacterized protein (250 aa).

The chain crosses the membrane as a helical span at residues 2-22; that stretch reads ILRIIIFVIIILVVSLLLIYF.

Its subcellular location is the membrane. This is an uncharacterized protein from Acanthamoeba polyphaga (Amoeba).